A 166-amino-acid polypeptide reads, in one-letter code: Small ribosomal subunit protein uS5 (166 aa).

The 64-residue stretch at 11–74 (LQEKLIAVNR…EKARRNMINV (64 aa)) folds into the S5 DRBM domain.

Belongs to the universal ribosomal protein uS5 family. Part of the 30S ribosomal subunit. Contacts proteins S4 and S8.

With S4 and S12 plays an important role in translational accuracy. Its function is as follows. Located at the back of the 30S subunit body where it stabilizes the conformation of the head with respect to the body. This is Small ribosomal subunit protein uS5 from Mannheimia succiniciproducens (strain KCTC 0769BP / MBEL55E).